Consider the following 298-residue polypeptide: GTP cyclohydrolase FolE2 (298 aa).

This sequence belongs to the GTP cyclohydrolase IV family.

It catalyses the reaction GTP + H2O = 7,8-dihydroneopterin 3'-triphosphate + formate + H(+). The protein operates within cofactor biosynthesis; 7,8-dihydroneopterin triphosphate biosynthesis; 7,8-dihydroneopterin triphosphate from GTP: step 1/1. Converts GTP to 7,8-dihydroneopterin triphosphate. This chain is GTP cyclohydrolase FolE2, found in Pseudomonas paraeruginosa (strain DSM 24068 / PA7) (Pseudomonas aeruginosa (strain PA7)).